Reading from the N-terminus, the 259-residue chain is Aminoglycoside 3'-phosphotransferase (259 aa).

The active-site Proton acceptor is Asp-187.

This sequence belongs to the aminoglycoside phosphotransferase family.

The catalysed reaction is kanamycin A + ATP = kanamycin 3'-phosphate + ADP + H(+). Functionally, resistance to kanamycin and structurally-related aminoglycosides, including amikacin. The chain is Aminoglycoside 3'-phosphotransferase (aphA-6) from Acinetobacter baumannii.